We begin with the raw amino-acid sequence, 62 residues long: Andropin (62 aa).

An N-terminal signal peptide occupies residues 1–22 (MKYFSVLVVLTLILAIVDQSDA).

The protein belongs to the andropin family. In terms of tissue distribution, ejaculatory duct of adult males.

It localises to the secreted. Functionally, male-specific peptide with moderate activity against Gram-positive bacteria. The polypeptide is Andropin (Anp) (Drosophila teissieri (Fruit fly)).